The following is a 417-amino-acid chain: S-inosyl-L-homocysteine hydrolase (417 aa).

Asp124 and Glu149 together coordinate substrate. 150–152 contacts NAD(+); the sequence is TTT. Lys179 and Asp183 together coordinate substrate. NAD(+) is bound by residues Asn184, 213–218, Glu236, Asn271, 292–294, and Asn339; these read GYGWCG and SGH.

Belongs to the adenosylhomocysteinase family. NAD(+) is required as a cofactor.

Its subcellular location is the cytoplasm. It catalyses the reaction S-inosyl-L-homocysteine + H2O = L-homocysteine + inosine. Its pathway is amino-acid biosynthesis; S-adenosyl-L-methionine biosynthesis. In terms of biological role, catalyzes the hydrolysis of S-inosyl-L-homocysteine (SIH) to L-homocysteine (Hcy) and inosine. Likely functions in a S-adenosyl-L-methionine (SAM) recycling pathway from S-adenosyl-L-homocysteine (SAH) produced from SAM-dependent methylation reactions. Can also catalyze the reverse reaction in vitro, i.e. the synthesis of SIH from Hcy and inosine. The protein is S-inosyl-L-homocysteine hydrolase of Methanothermobacter thermautotrophicus (strain ATCC 29096 / DSM 1053 / JCM 10044 / NBRC 100330 / Delta H) (Methanobacterium thermoautotrophicum).